A 1925-amino-acid chain; its full sequence is Diacylglycerol kinase eta (1925 aa).

One can recognise a PH domain in the interval 82-175 (AIIREGYLMK…WLGSLKTATA (94 aa)). 2 Phorbol-ester/DAG-type zinc fingers span residues 195–245 (HHHW…IANC) and 268–319 (PHQW…PIVC). The DAGKc domain maps to 350 to 486 (GNFSPLLVFV…DRWSIMVFEK (137 aa)). Disordered stretches follow at residues 620–641 (EKDN…SEKE), 783–805 (ANID…TPTE), 847–872 (DKER…SEPQ), 1013–1065 (TTLC…NPQQ), 1113–1141 (DRNS…TRTY), 1167–1234 (NTTT…SSAS), 1256–1276 (IRRH…KDKD), and 1385–1405 (FSAG…PTEE). Residues 792–802 (LSPSSEAGENT) show a composition bias toward polar residues. The span at 863–872 (ADVNEKSEPQ) shows a compositional bias: basic and acidic residues. The segment covering 1115 to 1128 (NSGDNHNDNGKNEE) has biased composition (basic and acidic residues). A compositionally biased stretch (low complexity) spans 1167-1187 (NTTTSTSSSISTTTTTSTTST). A compositionally biased stretch (basic and acidic residues) spans 1386–1405 (SAGDKDEKPGKDKERTPTEE). The region spanning 1862-1925 (WSVNEVVTWL…LQAIKDLSEN (64 aa)) is the SAM domain.

Belongs to the eukaryotic diacylglycerol kinase family.

Its subcellular location is the cytoplasm. It carries out the reaction a 1,2-diacyl-sn-glycerol + ATP = a 1,2-diacyl-sn-glycero-3-phosphate + ADP + H(+). In terms of biological role, phosphorylates diacylglycerol (DAG) to generate phosphatidic acid (PA). The protein is Diacylglycerol kinase eta of Drosophila mojavensis (Fruit fly).